We begin with the raw amino-acid sequence, 287 residues long: Small ribosomal subunit biogenesis GTPase RsgA (287 aa).

The region spanning 61–218 is the CP-type G domain; it reads SSELIRPTVA…LVDTPGFTTL (158 aa). GTP contacts are provided by residues 110–113 and 161–169; these read NKED and GPSGAGKST. The Zn(2+) site is built by Cys-242, Cys-247, His-249, and Cys-255.

The protein belongs to the TRAFAC class YlqF/YawG GTPase family. RsgA subfamily. Monomer. Associates with 30S ribosomal subunit, binds 16S rRNA. The cofactor is Zn(2+).

It localises to the cytoplasm. One of several proteins that assist in the late maturation steps of the functional core of the 30S ribosomal subunit. Helps release RbfA from mature subunits. May play a role in the assembly of ribosomal proteins into the subunit. Circularly permuted GTPase that catalyzes slow GTP hydrolysis, GTPase activity is stimulated by the 30S ribosomal subunit. This Clostridium perfringens (strain SM101 / Type A) protein is Small ribosomal subunit biogenesis GTPase RsgA.